Consider the following 53-residue polypeptide: UPF0391 membrane protein BURPS1106A_A2993 (53 aa).

Helical transmembrane passes span Ala5 to Ala25 and Ile30 to Val50.

The protein belongs to the UPF0391 family.

Its subcellular location is the cell membrane. The sequence is that of UPF0391 membrane protein BURPS1106A_A2993 from Burkholderia pseudomallei (strain 1106a).